The chain runs to 647 residues: UvrABC system protein C (647 aa).

The region spanning 16–95 is the GIY-YIG domain; the sequence is VEPGVYRFRD…IKEFDPRFNV (80 aa). A UVR domain is found at 208 to 243; the sequence is DRYARELEQQMNAAAENLDFERAARLRDDRSALKRA.

This sequence belongs to the UvrC family. In terms of assembly, interacts with UvrB in an incision complex.

It localises to the cytoplasm. In terms of biological role, the UvrABC repair system catalyzes the recognition and processing of DNA lesions. UvrC both incises the 5' and 3' sides of the lesion. The N-terminal half is responsible for the 3' incision and the C-terminal half is responsible for the 5' incision. The protein is UvrABC system protein C of Mycobacterium marinum (strain ATCC BAA-535 / M).